A 70-amino-acid polypeptide reads, in one-letter code: Large ribosomal subunit protein bL31 (70 aa).

4 residues coordinate Zn(2+): cysteine 16, cysteine 18, cysteine 36, and cysteine 39.

It belongs to the bacterial ribosomal protein bL31 family. Type A subfamily. In terms of assembly, part of the 50S ribosomal subunit. Requires Zn(2+) as cofactor.

Binds the 23S rRNA. This chain is Large ribosomal subunit protein bL31, found in Tolumonas auensis (strain DSM 9187 / NBRC 110442 / TA 4).